Reading from the N-terminus, the 726-residue chain is Catalase-peroxidase (726 aa).

Residues 90-213 constitute a cross-link (tryptophyl-tyrosyl-methioninium (Trp-Tyr) (with M-239)); sequence WHAAGTYRIG…LAAVQMGLIY (124 aa). Catalysis depends on His-91, which acts as the Proton acceptor. The segment at residues 213–239 is a cross-link (tryptophyl-tyrosyl-methioninium (Tyr-Met) (with W-90)); it reads YVNPEGPNGKPDPAAAARDIRETFARM. Heme b is bound at residue His-254. The disordered stretch occupies residues 338-359; that stretch reads TPKGGAGAGTVPDAHDPSKRHA.

The protein belongs to the peroxidase family. Peroxidase/catalase subfamily. In terms of assembly, homodimer or homotetramer. Requires heme b as cofactor. Formation of the three residue Trp-Tyr-Met cross-link is important for the catalase, but not the peroxidase activity of the enzyme.

It carries out the reaction H2O2 + AH2 = A + 2 H2O. It catalyses the reaction 2 H2O2 = O2 + 2 H2O. Functionally, bifunctional enzyme with both catalase and broad-spectrum peroxidase activity. This is Catalase-peroxidase from Bradyrhizobium sp. (strain ORS 278).